Consider the following 507-residue polypeptide: Maturase K (507 aa).

This sequence belongs to the intron maturase 2 family. MatK subfamily.

It is found in the plastid. Its subcellular location is the chloroplast. Its function is as follows. Usually encoded in the trnK tRNA gene intron. Probably assists in splicing its own and other chloroplast group II introns. This is Maturase K from Lyonia lucida (Fetterbush).